Here is a 344-residue protein sequence, read N- to C-terminus: Heptahelical transmembrane protein 3 (344 aa).

Topologically, residues 1–76 (MKRRRSAKKS…AFSWHNETLN (76 aa)) are cytoplasmic. The helical transmembrane segment at 77 to 97 (IWTHLIGFGIFLWMTVVSCLE) threads the bilayer. Residues 98–147 (TTEISLAGVFNGMAGVRICLSSNQTLLHDSNVTHHISCLTSQGEAIPKWP) lie on the Extracellular side of the membrane. The helical transmembrane segment at 148 to 168 (WLVYLVGAMGCLICSSVSHLL) threads the bilayer. At 169–184 (ACHSKRFNVFFWRLDY) the chain is on the cytoplasmic side. Residues 185 to 205 (AGISLMIVASFFAPIYYAFSC) form a helical membrane-spanning segment. The Extracellular segment spans residues 206-210 (HPNFR). The chain crosses the membrane as a helical span at residues 211-231 (LLYLSSISILGLLAIITLLSP). Over 232 to 244 (ALSTPRFRPFRAN) the chain is Cytoplasmic. Residues 245 to 265 (LFLAMGSSAVIPATHVLCLYW) traverse the membrane as a helical segment. Residues 266 to 269 (DHPN) lie on the Extracellular side of the membrane. Residues 270–290 (VFIALGYEIATALSYFVGATF) form a helical membrane-spanning segment. Over 291–312 (YVSRVPERWKPGAFDMAGHSHQ) the chain is Cytoplasmic. The helical transmembrane segment at 313–333 (IFHVFVVMGALAHCVTTLLII) threads the bilayer. Topologically, residues 334-344 (DFSRASPSCGF) are extracellular.

This sequence belongs to the ADIPOR family. Expressed in roots and flowers.

The protein localises to the membrane. In terms of biological role, may play a role in abiotic stress response. This chain is Heptahelical transmembrane protein 3 (HHP3), found in Arabidopsis thaliana (Mouse-ear cress).